Consider the following 330-residue polypeptide: DNA-directed RNA polymerase subunit alpha (330 aa).

The interval 1–225 (MSDLAIPTIS…KQFASLVSHS (225 aa)) is alpha N-terminal domain (alpha-NTD). The tract at residues 237–330 (VKYTIPEEKY…KKKNKGIDED (94 aa)) is alpha C-terminal domain (alpha-CTD).

The protein belongs to the RNA polymerase alpha chain family. As to quaternary structure, homodimer. The RNAP catalytic core consists of 2 alpha, 1 beta, 1 beta' and 1 omega subunit. When a sigma factor is associated with the core the holoenzyme is formed, which can initiate transcription.

It carries out the reaction RNA(n) + a ribonucleoside 5'-triphosphate = RNA(n+1) + diphosphate. Its function is as follows. DNA-dependent RNA polymerase catalyzes the transcription of DNA into RNA using the four ribonucleoside triphosphates as substrates. This Dehalococcoides mccartyi (strain CBDB1) protein is DNA-directed RNA polymerase subunit alpha.